Reading from the N-terminus, the 254-residue chain is Phytolongin Phyl1.1 (254 aa).

One can recognise a Longin domain in the interval 12 to 113; sequence CVSRDNQILY…TAMIGSINVE (102 aa). Residues 138 to 173 form a disordered region; that stretch reads ELKSSNLGEQSEGSNSTKAPLLGRLSKQEKKKGKDH. The span at 145–155 shows a compositional bias: polar residues; sequence GEQSEGSNSTK. Residues 226–246 traverse the membrane as a helical; Anchor for type IV membrane protein segment; it reads IVLAIDAAICLTLFGIWLAIC.

Belongs to the synaptobrevin family.

It localises to the membrane. Its function is as follows. Non-SNARE longin protein involved in membrane-trafficking machinery. The sequence is that of Phytolongin Phyl1.1 from Arabidopsis thaliana (Mouse-ear cress).